Reading from the N-terminus, the 492-residue chain is MAKSKKKTDVVDSTNLPILELLSLKAPIFQSLLHPELPIIITGFGTGHIVCHRYDPAKLQSHLDRRRRIDTATTGKDAKKGVCPWIRLDIDLETGDLKFVDIEEQQQQKQTGKDEDLGVKTLWKTKRHKGSVRAMCFDSKGDNIFSVGSDNVLKKANTMTGKVVKKVNLSSLFNSEEKKNDKFTKLCASQTHPFILIGDESGNIHVINSENLALSNSIRSIHFGDSINDIFHFDKRSAYKFISLGQTTLAYFDVRDKDAKPNVAGNEDGKILISDDQEDEVLCGCFVDPEVADTLLCGMGEGIVTVWKPNKNDLEDQMSRIKISKDESIDCIVPTLQDDNCVWCGCSNGNIYKVNAKLGKVVEIRNHSELDEVSFVDLDFEYRVVSGGLENIKIWELSSDDVEENASVESDSDEPLSHSDEDLSDDTSSDDETTLVGLSKEELLDELDKDLKEDHQEEKESNSKSVKKRKIMKENNKKKDLYEHGIKKFDDL.

5 WD repeats span residues 127 to 166 (RHKGSVRAMCFDSKGDNIFSVGSDNVLKKANTMTGKVVKK), 178 to 217 (KKNDKFTKLCASQTHPFILIGDESGNIHVINSENLALSNS), 236 to 274 (RSAYKFISLGQTTLAYFDVRDKDAKPNVAGNEDGKILIS), 276 to 317 (DQED…LEDQ), and 365 to 405 (RNHS…VEEN). 2 stretches are compositionally biased toward acidic residues: residues 404–414 (ENASVESDSDE) and 422–433 (DLSDDTSSDDET). Residues 404-472 (ENASVESDSD…SKSVKKRKIM (69 aa)) are disordered. The segment covering 449 to 462 (KDLKEDHQEEKESN) has biased composition (basic and acidic residues).

Interacts with BUD27 and GIS1.

The protein resides in the nucleus. The protein localises to the nucleolus. The sequence is that of WD repeat-containing protein JIP5 (JIP5) from Saccharomyces cerevisiae (strain ATCC 204508 / S288c) (Baker's yeast).